The sequence spans 495 residues: Probable endopolygalacturonase D (495 aa).

Positions 1 to 16 (MKRSALLASFLPLALG) are cleaved as a signal peptide. Cys154 and Cys169 are oxidised to a cystine. 3 PbH1 repeats span residues 261 to 283 (MYNS…EIEN), 284 to 322 (TEYL…DIKQ), and 323 to 344 (SDFL…AVTS). A glycan (N-linked (GlcNAc...) asparagine) is linked at Asn295. Asp337 functions as the Proton donor in the catalytic mechanism. An intrachain disulfide couples Cys339 to Cys355. The active site involves His359. Residue Asn371 is glycosylated (N-linked (GlcNAc...) asparagine). 2 PbH1 repeats span residues 374–395 (VDGV…RIKS) and 403–425 (VYNV…DIQQ). Asn410 and Asn444 each carry an N-linked (GlcNAc...) asparagine glycan. Cystine bridges form between Cys464/Cys469 and Cys487/Cys494. Residues 469 to 492 (CSNFVFTDVDITGGSDDSCNYPSS) form a PbH1 6 repeat.

It belongs to the glycosyl hydrolase 28 family.

It localises to the secreted. The enzyme catalyses (1,4-alpha-D-galacturonosyl)n+m + H2O = (1,4-alpha-D-galacturonosyl)n + (1,4-alpha-D-galacturonosyl)m.. Functionally, involved in maceration and soft-rotting of plant tissue. Hydrolyzes the 1,4-alpha glycosidic bonds of de-esterified pectate in the smooth region of the plant cell wall. In Aspergillus niger (strain ATCC MYA-4892 / CBS 513.88 / FGSC A1513), this protein is Probable endopolygalacturonase D (pgaD).